The sequence spans 241 residues: Uridylate kinase (241 aa).

Residue 14 to 17 (KLSG) participates in ATP binding. Gly56 contributes to the UMP binding site. ATP-binding residues include Gly57 and Arg61. Residues Asp77 and 138–145 (TGNPFFTT) contribute to the UMP site. Residues Thr165, Tyr171, and Asp174 each contribute to the ATP site.

This sequence belongs to the UMP kinase family. Homohexamer.

It is found in the cytoplasm. The catalysed reaction is UMP + ATP = UDP + ADP. Its pathway is pyrimidine metabolism; CTP biosynthesis via de novo pathway; UDP from UMP (UMPK route): step 1/1. Its activity is regulated as follows. Inhibited by UTP. In terms of biological role, catalyzes the reversible phosphorylation of UMP to UDP. The polypeptide is Uridylate kinase (Psychrobacter arcticus (strain DSM 17307 / VKM B-2377 / 273-4)).